The chain runs to 451 residues: MAKHERGLRFQPTGGVKSVQIPAGKKQRLSIERLSDDGRGIAFLEGKTWFVAGSLAGEEVEARVLNARGKVVEARTERVFVASDLRRAPACDYFGRCGGCSVQHVPHEEQLALKQRMLAEQLLRVANVVPDEWAAPLSGAELAYRRRARVAVRWDAKAKRLDVGFRAAASQDIVSIEECPVLVQALQPIMSQLPAMLKSFSKPQVLGHVELFSGSSTAVLLRHTAPLAEADLATLQAFCKTHGAQLWLHGEGEPQPASPGDTLGYRLEPWNLQLAWRPGDFIQVNAAVNTAMIEQALHWLAPAADERVMDLFCGLGNFALPLASLAKDVVAVEGVATMVERAAVNAMSNDLHNVRFFQADLSQPLTHADWAAEGFSAVLLDPPRDGAFEVVRQIRKTGAQRLLYVSCNPATLARDTVELVKQGYRLKRAGILDMFPQTAHVEAMALFEVSK.

Positions 1-21 (MAKHERGLRFQPTGGVKSVQI) are disordered. One can recognise a TRAM domain in the interval 20 to 78 (QIPAGKKQRLSIERLSDDGRGIAFLEGKTWFVAGSLAGEEVEARVLNARGKVVEARTER). [4Fe-4S] cluster contacts are provided by Cys-91, Cys-97, Cys-100, and Cys-179. Gln-283, Phe-312, Asn-317, Glu-333, Asp-360, and Asp-381 together coordinate S-adenosyl-L-methionine. Cys-407 (nucleophile) is an active-site residue.

It belongs to the class I-like SAM-binding methyltransferase superfamily. RNA M5U methyltransferase family. RlmD subfamily.

The enzyme catalyses uridine(1939) in 23S rRNA + S-adenosyl-L-methionine = 5-methyluridine(1939) in 23S rRNA + S-adenosyl-L-homocysteine + H(+). Functionally, catalyzes the formation of 5-methyl-uridine at position 1939 (m5U1939) in 23S rRNA. The chain is 23S rRNA (uracil(1939)-C(5))-methyltransferase RlmD from Pseudomonas syringae pv. tomato (strain ATCC BAA-871 / DC3000).